The sequence spans 452 residues: Na(+)/H(+) antiporter NhaA (452 aa).

Helical transmembrane passes span 23–43 (MMLFLASVLAVIMANSSLSTI), 71–91 (LLQFVNDVLMVIFFLAVGLEI), 108–128 (LPIVGAIGGMIVPVLFFLLVV), 136–156 (GAAIPMSTDIAFALAALAVLG), 165–185 (VFLTALAVADDIGGIIVIALF), 189–209 (HINIGMLAIAFGILFIMYLMG), 216–236 (LGLYFVCTFFVWLFFLQSGIH), 316–336 (IVGYFVLPLFAFANAGITLGG), 349–369 (VFLGLFVGKPLGIYFFTYGFV), 385–405 (LMAVSLFGGIGFTVSLFIATL), and 418–438 (EAKLGIFVASIFAALVGIVTL).

This sequence belongs to the NhaA Na(+)/H(+) (TC 2.A.33) antiporter family.

It localises to the cell inner membrane. The enzyme catalyses Na(+)(in) + 2 H(+)(out) = Na(+)(out) + 2 H(+)(in). Its function is as follows. Na(+)/H(+) antiporter that extrudes sodium in exchange for external protons. This chain is Na(+)/H(+) antiporter NhaA, found in Porphyromonas gingivalis (strain ATCC BAA-308 / W83).